Reading from the N-terminus, the 854-residue chain is DNA topoisomerase 1 type prokaryotic (854 aa).

A Toprim domain is found at 2–110 (SILILLESPG…KRLRFNAITK (109 aa)). Residues Glu-8 and Asp-79 each contribute to the Mg(2+) site. The 487-residue stretch at 124 to 610 (DKNLVDAQKA…DFYDKLKPIV (487 aa)) folds into the Topo IA-type catalytic domain. An interaction with DNA region spans residues 158-163 (SAGRVQ). Tyr-302 acts as the O-(5'-phospho-DNA)-tyrosine intermediate in catalysis. Residues 802–854 (KSAPKGGSKTIRKPSQTKYSQTKSTKSTKSTKSTNKKFVGKSAKKTTKKTTKK) are disordered. Positions 814 to 834 (KPSQTKYSQTKSTKSTKSTKS) are enriched in low complexity. Basic residues predominate over residues 835–854 (TNKKFVGKSAKKTTKKTTKK).

It belongs to the type IA topoisomerase family. It depends on Mg(2+) as a cofactor.

The protein localises to the virion. It catalyses the reaction ATP-independent breakage of single-stranded DNA, followed by passage and rejoining.. Releases the supercoiling and torsional tension of DNA, which is introduced during the DNA replication and transcription, by transiently cleaving and rejoining one strand of the DNA duplex. Introduces a single-strand break via transesterification at a target site in duplex DNA. The scissile phosphodiester is attacked by the catalytic tyrosine of the enzyme, resulting in the formation of a DNA-(5'-phosphotyrosyl)-enzyme intermediate and the expulsion of a 3'-OH DNA strand. The free DNA strand then undergoes passage around the unbroken strand, thus removing DNA supercoils. Finally, in the religation step, the DNA 3'-OH attacks the covalent intermediate to expel the active-site tyrosine and restore the DNA phosphodiester backbone. This Acanthamoeba polyphaga (Amoeba) protein is DNA topoisomerase 1 type prokaryotic (TOP1P).